Here is a 428-residue protein sequence, read N- to C-terminus: D-amino acid dehydrogenase (428 aa).

3–17 (VVVLGSGVVGVTSAY) is a binding site for FAD.

It belongs to the DadA oxidoreductase family. FAD serves as cofactor.

The enzyme catalyses a D-alpha-amino acid + A + H2O = a 2-oxocarboxylate + AH2 + NH4(+). The protein operates within amino-acid degradation; D-alanine degradation; NH(3) and pyruvate from D-alanine: step 1/1. Its function is as follows. Oxidative deamination of D-amino acids. In Paraburkholderia phymatum (strain DSM 17167 / CIP 108236 / LMG 21445 / STM815) (Burkholderia phymatum), this protein is D-amino acid dehydrogenase.